The primary structure comprises 225 residues: Phosphatidylserine decarboxylase proenzyme (225 aa).

The Schiff-base intermediate with substrate; via pyruvic acid role is filled by Ser182. Position 182 is a pyruvic acid (Ser); by autocatalysis (Ser182).

It belongs to the phosphatidylserine decarboxylase family. PSD-A subfamily. In terms of assembly, heterodimer of a large membrane-associated beta subunit and a small pyruvoyl-containing alpha subunit. Pyruvate serves as cofactor. In terms of processing, is synthesized initially as an inactive proenzyme. Formation of the active enzyme involves a self-maturation process in which the active site pyruvoyl group is generated from an internal serine residue via an autocatalytic post-translational modification. Two non-identical subunits are generated from the proenzyme in this reaction, and the pyruvate is formed at the N-terminus of the alpha chain, which is derived from the carboxyl end of the proenzyme. The post-translation cleavage follows an unusual pathway, termed non-hydrolytic serinolysis, in which the side chain hydroxyl group of the serine supplies its oxygen atom to form the C-terminus of the beta chain, while the remainder of the serine residue undergoes an oxidative deamination to produce ammonia and the pyruvoyl prosthetic group on the alpha chain.

It localises to the cell membrane. It catalyses the reaction a 1,2-diacyl-sn-glycero-3-phospho-L-serine + H(+) = a 1,2-diacyl-sn-glycero-3-phosphoethanolamine + CO2. It participates in phospholipid metabolism; phosphatidylethanolamine biosynthesis; phosphatidylethanolamine from CDP-diacylglycerol: step 2/2. In terms of biological role, catalyzes the formation of phosphatidylethanolamine (PtdEtn) from phosphatidylserine (PtdSer). This is Phosphatidylserine decarboxylase proenzyme from Neorickettsia sennetsu (strain ATCC VR-367 / Miyayama) (Ehrlichia sennetsu).